The sequence spans 217 residues: Mucosal pentraxin (217 aa).

An N-terminal signal peptide occupies residues 1–19 (MEKLLLGVLLLAFLPEGMT). Residues 24–217 (RGKVFIFPEQ…KGYVVVKPKL (194 aa)) form the Pentraxin (PTX) domain. Cys-55 and Cys-114 are joined by a disulfide. Asp-77, Asn-78, Glu-155, Gln-156, Asp-157, and Gln-167 together coordinate Ca(2+).

This sequence belongs to the pentraxin family. As to quaternary structure, homopentamer. Pentraxin (or pentaxin) have a discoid arrangement of 5 non-covalently bound subunits. Ca(2+) serves as cofactor.

It localises to the secreted. The polypeptide is Mucosal pentraxin (MPTX) (Bos taurus (Bovine)).